Consider the following 1045-residue polypeptide: MILNKKLKLAYCVFLGCYGLSLHSSLAAYREPGQLGSPDSWKNAEFNRQWGLEAISAEFAYARAYTGKGVTIGVIDDAILSHPEFAGKLTRLDNGSYNFSYDKQDNMSFGTHGTHVAGIAAAKRDGSGMHGVAYDADIIGTKLNDYGNRNGREELIQSAARVINNSWGIRPDIRRDAKGDIIWLPNGRPDYVAWVKTDVINEVMRNKSNLEWGSEQPVPTGGHSAMATLLRAAKHGKLIVFSAGNYNNYNIPEAQKSLPYAFPEVLNNYLIVTNLSNNDKLSVSSTSCGHTASFLACQPGSSIYSSVGELVSNTGGAVNREAYNKGELTVKPDYGNMSGTSMAPDVTGFAAVLMQRFPYMSAAQISAVIKTTATDLGEVGIDHLFGWGRVNLRDAINGPKMFITQEDIPQEFYVPGSYSEKQFVVNIPGLGNIVEAGTPVERRCTSGECDFDSWSNDIRGHGGLTKTGAGTLAVLGNNTYSGDTWVKQGVLAYNGSVASNVYIENSGTVAGDRTVGAFRAVRGCEHGDAGNGYGTLHVLLDAVFDRGSQYNVELADKGRSDKLAARRAFLNGGSMNVSLDRSQKLMSQNEAELLVGNNYTILTTLDGVTGRFDNANPSYPFVKVALDYRGNDTGLGITKTDATFDSLASTENDKEVARAVETLNATEPVTETAKRSVSIPASEEANLQQSDAGAAQAVNEEASIVAGHPIYESFLGFTTARELQQATRQLSGQIHADMASAQINESRYLRDTATERLRQADGRRTASDIKADDNGAWAKLLGNWGHASGNDNATGYQTSTYGVLLGLDSELFDDGRLGVMTGYTRTSLVGGLQSVVHSDTTHLGLYGDKRFGALALPAGGTYTWHRIDTSRSVNYGAQADREKARYNARTGQLFIESGYDWSNDVVNLEPFANLAYTHYRNEGINEQGGAAALRGDKQSQSATASTLGLRADTQWQTDSVAIALPGELGWQHQYGKLERKTQLMFKRSDVAFDVNSVPVSRDGAILKAGVDVSINKNVVLSLGYGGQLSSNHQDNSVNAGLTWRF.

Residues 1–27 (MILNKKLKLAYCVFLGCYGLSLHSSLA) form the signal peptide. A Peptidase S8 domain is found at 49–396 (QWGLEAISAE…WGRVNLRDAI (348 aa)). Catalysis depends on charge relay system residues D76, H112, and S341. A propeptide spanning residues 646–1045 (SLASTENDKE…SVNAGLTWRF (400 aa)) is cleaved from the precursor. The 277-residue stretch at 769 to 1045 (IKADDNGAWA…SVNAGLTWRF (277 aa)) folds into the Autotransporter domain.

Belongs to the peptidase S8 family.

Its subcellular location is the secreted. This Serratia marcescens protein is Extracellular serine protease.